Reading from the N-terminus, the 492-residue chain is Probable endopolygalacturonase D (492 aa).

The signal sequence occupies residues methionine 1–glycine 16. Residues cysteine 151 and cysteine 166 are joined by a disulfide bond. PbH1 repeat units lie at residues glycine 216–aspartate 238, methionine 258–serine 280, threonine 281–glutamate 319, and serine 320–serine 341. N-linked (GlcNAc...) asparagine glycosylation occurs at asparagine 292. Residue aspartate 334 is the Proton donor of the active site. Cysteine 336 and cysteine 352 are joined by a disulfide. Histidine 356 is a catalytic residue. PbH1 repeat units lie at residues valine 371–threonine 392, valine 400–glutamine 422, and threonine 434–glycine 478. Asparagine 407 and asparagine 441 each carry an N-linked (GlcNAc...) asparagine glycan. Intrachain disulfides connect cysteine 461/cysteine 466 and cysteine 484/cysteine 491.

The protein belongs to the glycosyl hydrolase 28 family.

The protein localises to the secreted. The catalysed reaction is (1,4-alpha-D-galacturonosyl)n+m + H2O = (1,4-alpha-D-galacturonosyl)n + (1,4-alpha-D-galacturonosyl)m.. In terms of biological role, involved in maceration and soft-rotting of plant tissue. Hydrolyzes the 1,4-alpha glycosidic bonds of de-esterified pectate in the smooth region of the plant cell wall. This Aspergillus flavus (strain ATCC 200026 / FGSC A1120 / IAM 13836 / NRRL 3357 / JCM 12722 / SRRC 167) protein is Probable endopolygalacturonase D (pgaD).